The chain runs to 111 residues: Secreted RxLR effector protein 159 (111 aa).

Residues 1–21 (MRGAYYVAIAFLVAASSRTAA) form the signal peptide. The short motif at 50–71 (RVLRGSRDLKDKLAVYANDEQR) is the RxLR-dEER element. An N-linked (GlcNAc...) asparagine glycan is attached at N81.

The protein belongs to the RxLR effector family.

The protein localises to the secreted. The protein resides in the host nucleus. It localises to the host cytoplasm. In terms of biological role, secreted effector that completely suppresses the host cell death induced by cell death-inducing proteins. In Plasmopara viticola (Downy mildew of grapevine), this protein is Secreted RxLR effector protein 159.